The sequence spans 492 residues: Protein KOKOPELLI (492 aa).

Disordered stretches follow at residues 218–354 (VTSP…RNVM) and 394–426 (SKFH…QHQG). The segment covering 256–270 (QETETFDDDSSETEA) has biased composition (acidic residues). The segment covering 287–305 (STSQEYSGETGSSSGSEWE) has biased composition (low complexity). Positions 317–336 (ESSYPPQNDDSVSEVSTSPP) are enriched in polar residues. 2 stretches are compositionally biased toward basic and acidic residues: residues 337 to 348 (HTDRDTSREPGK) and 403 to 412 (KSKERKRPMS).

In terms of tissue distribution, mostly expressed in pollen and open flowers and, to a lower extent, in closed flowers.

Positively regulates reproductive function by facilitating male gametophyte formation and double fertilization. The chain is Protein KOKOPELLI from Arabidopsis thaliana (Mouse-ear cress).